A 24-amino-acid polypeptide reads, in one-letter code: Caerin-2.1 (24 aa).

Belongs to the frog skin active peptide (FSAP) family. Caerin subfamily. In terms of tissue distribution, expressed by the skin dorsal glands.

The protein resides in the secreted. Functionally, inhibits the formation of NO by neuronal nitric oxide synthase. The chain is Caerin-2.1 from Litoria rothii (Roth's tree frog).